Here is a 306-residue protein sequence, read N- to C-terminus: MANTWWELQISCESALEDSVSWRLEDFGCRGTASESKGDSCLVKGYLPIFQAQLLDLAALGLWLQQDALCIGLSSPTLTWQLIDEEDWASSWKQYWHPQEIGDRFLINPAWLPSPENSDRLIIRLDPGVAFGTGNHATTQLCLESLEMRLSEVPKSFISKGGNQEPVIIADIGCGSGILSIGAVLLGAQKVYAVDTDPLAVQSTFSNRALNEVNPERLVPAEGSVDILKKLIERPVDGIVCNILADVIIQLVPEISEISKPSTWAIFSGILVEQSTSVAEALEKHGWVVATMWKRKEWCCLNVRRT.

The S-adenosyl-L-methionine site is built by Thr139, Gly173, Asp195, and Asn242.

It belongs to the methyltransferase superfamily. PrmA family.

It is found in the cytoplasm. The enzyme catalyses L-lysyl-[protein] + 3 S-adenosyl-L-methionine = N(6),N(6),N(6)-trimethyl-L-lysyl-[protein] + 3 S-adenosyl-L-homocysteine + 3 H(+). Methylates ribosomal protein L11. This chain is Ribosomal protein L11 methyltransferase, found in Nostoc sp. (strain PCC 7120 / SAG 25.82 / UTEX 2576).